We begin with the raw amino-acid sequence, 374 residues long: Ribosomal RNA large subunit methyltransferase G (374 aa).

This sequence belongs to the methyltransferase superfamily. RlmG family.

The protein resides in the cytoplasm. The enzyme catalyses guanosine(1835) in 23S rRNA + S-adenosyl-L-methionine = N(2)-methylguanosine(1835) in 23S rRNA + S-adenosyl-L-homocysteine + H(+). In terms of biological role, specifically methylates the guanine in position 1835 (m2G1835) of 23S rRNA. This is Ribosomal RNA large subunit methyltransferase G from Pseudomonas putida (strain ATCC 47054 / DSM 6125 / CFBP 8728 / NCIMB 11950 / KT2440).